The primary structure comprises 82 residues: Small ribosomal subunit protein bS16c (82 aa).

It belongs to the bacterial ribosomal protein bS16 family.

It localises to the plastid. The protein resides in the chloroplast. In Porphyra purpurea (Red seaweed), this protein is Small ribosomal subunit protein bS16c.